Here is a 65-residue protein sequence, read N- to C-terminus: Hainantoxin-X (65 aa).

The signal sequence occupies residues 1-20 (MNMKILVLVAVLCLVVSTHA). Positions 21–37 (ERHSKTDMEDSPMIQER) are excised as a propeptide. Disulfide bonds link cysteine 39/cysteine 56, cysteine 46/cysteine 59, and cysteine 55/cysteine 64.

This sequence belongs to the neurotoxin 36 family. 02 subfamily. Expressed by the venom gland.

The protein resides in the secreted. Functionally, reversibly blocks N-type calcium channels (Cav2.2/CACNA1B) in rat dorsal root ganglion cells. Elicits no toxic symptoms in either vertebrates or invertebrates during a period of 48 hours post-injection, when it was assayed in vivo by direct injection into mice and cockroaches. In Cyriopagopus hainanus (Chinese bird spider), this protein is Hainantoxin-X.